Here is a 292-residue protein sequence, read N- to C-terminus: AKT-interacting protein (292 aa).

The tract at residues 1–63 (MNPLWSMSAG…TSPAPAAQST (63 aa)) is disordered. Over residues 14–23 (KRAEGEEKTL) the composition is skewed to basic and acidic residues. Position 30 is a phosphoserine (Ser30). A UBC core domain is found at 74-222 (YLEYSLLAEF…VVDSVKVCTA (149 aa)).

This sequence belongs to the ubiquitin-conjugating enzyme family. FTS subfamily. In terms of assembly, component of the FTS/Hook/FHIP complex (FHF complex), composed of AKTIP/FTS, FHIP1B, and one or more members of the Hook family of proteins HOOK1, HOOK2, and HOOK3. Interacts directly with HOOK1, HOOK2 and HOOK3. The FHF complex associates with the homotypic vesicular sorting complex (the HOPS complex). Also interacts with AKT1. May interact with FHIP1A. In terms of tissue distribution, ubiquitous. Highest expression in kidney, testis and brain and lowest in spleen and liver.

The protein localises to the cytoplasm. It localises to the cell membrane. Component of the FTS/Hook/FHIP complex (FHF complex). The FHF complex may function to promote vesicle trafficking and/or fusion via the homotypic vesicular protein sorting complex (the HOPS complex). Regulates apoptosis by enhancing phosphorylation and activation of AKT1. Increases release of TNFSF6 via the AKT1/GSK3B/NFATC1 signaling cascade. FHF complex promotes the distribution of AP-4 complex to the perinuclear area of the cell. The sequence is that of AKT-interacting protein (Aktip) from Mus musculus (Mouse).